The sequence spans 286 residues: Carbohydrate-binding domain-containing protein Cthe_2159 (286 aa).

Residues 1 to 20 (MSIKKLILAASILTTLALTG) form the signal peptide. A lipid anchor (N-palmitoyl cysteine) is attached at C21. C21 is lipidated: S-diacylglycerol cysteine. A polygalacturonic acid-binding region spans residues 124–225 (GKDNVLTDAE…GIKVENTEEP (102 aa)). Ca(2+)-binding residues include R152, D153, D154, N177, D178, D215, D243, D244, and D247.

Monomer.

It is found in the cell membrane. Functionally, binds cellulosic and pectic substrates. Displays no enzyme activity (in vitro). The chain is Carbohydrate-binding domain-containing protein Cthe_2159 from Acetivibrio thermocellus (strain ATCC 27405 / DSM 1237 / JCM 9322 / NBRC 103400 / NCIMB 10682 / NRRL B-4536 / VPI 7372) (Clostridium thermocellum).